Reading from the N-terminus, the 448-residue chain is Phosphoglucosamine mutase (448 aa).

The active-site Phosphoserine intermediate is the serine 104. Serine 104, aspartate 245, aspartate 247, and aspartate 249 together coordinate Mg(2+). Phosphoserine is present on serine 104.

Belongs to the phosphohexose mutase family. Mg(2+) is required as a cofactor. In terms of processing, activated by phosphorylation.

The catalysed reaction is alpha-D-glucosamine 1-phosphate = D-glucosamine 6-phosphate. Its function is as follows. Catalyzes the conversion of glucosamine-6-phosphate to glucosamine-1-phosphate. This chain is Phosphoglucosamine mutase, found in Caulobacter vibrioides (strain ATCC 19089 / CIP 103742 / CB 15) (Caulobacter crescentus).